The following is a 464-amino-acid chain: ATP synthase subunit beta (464 aa).

152–159 (GGAGVGKT) lines the ATP pocket.

The protein belongs to the ATPase alpha/beta chains family. In terms of assembly, F-type ATPases have 2 components, CF(1) - the catalytic core - and CF(0) - the membrane proton channel. CF(1) has five subunits: alpha(3), beta(3), gamma(1), delta(1), epsilon(1). CF(0) has three main subunits: a(1), b(2) and c(9-12). The alpha and beta chains form an alternating ring which encloses part of the gamma chain. CF(1) is attached to CF(0) by a central stalk formed by the gamma and epsilon chains, while a peripheral stalk is formed by the delta and b chains.

Its subcellular location is the cell membrane. It catalyses the reaction ATP + H2O + 4 H(+)(in) = ADP + phosphate + 5 H(+)(out). Functionally, produces ATP from ADP in the presence of a proton gradient across the membrane. The catalytic sites are hosted primarily by the beta subunits. This Ureaplasma urealyticum serovar 10 (strain ATCC 33699 / Western) protein is ATP synthase subunit beta.